A 98-amino-acid chain; its full sequence is Competence protein ComGC (98 aa).

The propeptide occupies 1–5; the sequence is MNEKG. The tract at residues 4 to 29 is may be involved in polymerization of ComGC; the sequence is KGFTLVEMLIVLFIISILLLITIPNV. Phe6 carries the N-methylphenylalanine modification. Residues 6–26 traverse the membrane as a helical segment; the sequence is FTLVEMLIVLFIISILLLITI. Cysteines 41 and 81 form a disulfide.

The protein belongs to the ComGC family. As to quaternary structure, the transformation pili are flexible filaments, consisting mainly of the major pilin ComGC and smaller amounts of the minor pilins, including at least ComGD, ComGF and ComGG. Homodimer. Forms higher-order multimers. Interacts with ComGG; the interaction is probably direct. In terms of processing, processing of ComGC in competent cells requires ComC, while stabilization, possibly by formation of a disulfide bond, requires BdbC and BdbD.

Its subcellular location is the cell membrane. It localises to the cell surface. It is found in the fimbrium. Major component of the type IV-like pilus (T4P) that plays a role in transformation. Transformation pili are dynamically extended and retracted, perhaps thereby promoting DNA uptake and transformation. Required for transformation and DNA binding. The protein is Competence protein ComGC (comGC) of Bacillus subtilis (strain 168).